A 153-amino-acid chain; its full sequence is MSSKIILLILMFLSFISKNKSLGIATIVMLFISFFNTEKCITFMENHFMNLGMTFLMIWMLIPIIKNPEFTENIKNAFNLKGIVCFLCGAIVAVLASKGVGFLKGSTDTLTGIILGSIVGVSLLGGVPVGPLIASGIAYEVVFIINLIFKNNC.

The next 4 helical transmembrane spans lie at 5-25 (IILL…LGIA), 45-65 (ENHF…IPII), 83-103 (IVCF…VGFL), and 113-133 (IILG…GPLI).

It belongs to the UPF0756 family.

The protein localises to the cell membrane. In Clostridium novyi (strain NT), this protein is UPF0756 membrane protein NT01CX_1209.